The sequence spans 58 residues: Metallothionein-1 (58 aa).

The interval 1 to 28 is beta; sequence PGPCCKDKCECAEGGCKTGCKCTSCRCA. Residues Cys4, Cys5, Cys9, Cys11, Cys16, Cys20, Cys22, Cys25, Cys27, Cys30, Cys33, Cys37, Cys39, Cys45, Cys49, Cys53, Cys55, and Cys56 each contribute to the a divalent metal cation site. The tract at residues 29–58 is alpha; the sequence is PCEKCTSGCKCPSKDECAKTCSKPCSCCXX.

It belongs to the metallothionein superfamily. Type 3 family.

Functionally, metallothioneins have a high content of cysteine residues that bind various heavy metals. The different forms of lobster metallothioneins may have different biological functions. Class I MTS in marine crustacea are involved in the sequestration of elevated levels of heavy-metal ions. Binds 6 metal ions. Known to bind cadmium. The protein is Metallothionein-1 of Homarus americanus (American lobster).